The primary structure comprises 262 residues: Tryptophan synthase alpha chain (262 aa).

Catalysis depends on proton acceptor residues E47 and D58.

It belongs to the TrpA family. As to quaternary structure, tetramer of two alpha and two beta chains.

It catalyses the reaction (1S,2R)-1-C-(indol-3-yl)glycerol 3-phosphate + L-serine = D-glyceraldehyde 3-phosphate + L-tryptophan + H2O. The protein operates within amino-acid biosynthesis; L-tryptophan biosynthesis; L-tryptophan from chorismate: step 5/5. The alpha subunit is responsible for the aldol cleavage of indoleglycerol phosphate to indole and glyceraldehyde 3-phosphate. The protein is Tryptophan synthase alpha chain of Chromobacterium violaceum (strain ATCC 12472 / DSM 30191 / JCM 1249 / CCUG 213 / NBRC 12614 / NCIMB 9131 / NCTC 9757 / MK).